The sequence spans 223 residues: RNA-free ribonuclease P (223 aa).

This sequence belongs to the HARP family.

It catalyses the reaction Endonucleolytic cleavage of RNA, removing 5'-extranucleotides from tRNA precursor.. Its function is as follows. RNA-free RNase P that catalyzes the removal of the 5'-leader sequence from pre-tRNA to produce the mature 5'-terminus. The protein is RNA-free ribonuclease P of Methanococcus maripaludis (strain C7 / ATCC BAA-1331).